A 256-amino-acid chain; its full sequence is Small ribosomal subunit protein uS2 (256 aa).

It belongs to the universal ribosomal protein uS2 family.

In Ruegeria sp. (strain TM1040) (Silicibacter sp.), this protein is Small ribosomal subunit protein uS2.